The sequence spans 333 residues: Cilia- and flagella-associated protein 119 (333 aa).

Residues methionine 1–leucine 10 are compositionally biased toward polar residues. 2 disordered regions span residues methionine 1–phenylalanine 70 and arginine 309–lysine 333. Serine 34 carries the phosphoserine modification. Over residues threonine 44–proline 58 the composition is skewed to polar residues. Positions isoleucine 284–glutamine 319 form a coiled coil.

The protein localises to the cell projection. The protein resides in the cilium. Its subcellular location is the flagellum. It is found in the cytoplasmic vesicle. It localises to the secretory vesicle. The protein localises to the acrosome. The protein resides in the cytoplasm. The protein is Cilia- and flagella-associated protein 119 of Mus musculus (Mouse).